The following is a 1161-amino-acid chain: Auxin response factor 19 (1161 aa).

The tract at residues 1-20 (MMKQAQQQPPPPPASSAATT) is disordered. A DNA-binding region (TF-B3) is located at residues 154–256 (FCKTLTASDT…QLLLGIRRAN (103 aa)). Residues 573–598 (NQMQQQHASSTQGQQPATSQPLLLPQ) form a disordered region. Residues 1027–1111 (RTFTKVYKRG…KCIRILSPQE (85 aa)) enclose the PB1 domain.

It belongs to the ARF family. As to quaternary structure, homodimers and heterodimers. Expressed in roots, culms, leaves and young panicles.

It is found in the nucleus. Its function is as follows. Auxin response factors (ARFs) are transcriptional factors that bind specifically to the DNA sequence 5'-TGTCTC-3' found in the auxin-responsive promoter elements (AuxREs). The chain is Auxin response factor 19 (ARF19) from Oryza sativa subsp. japonica (Rice).